The sequence spans 912 residues: Receptor protein kinase WSS1 (912 aa).

A signal peptide spans 1-27 (MGRDARRLPLLPFLLLLLAAAAGVAES). Residues 28-477 (ATDAEAIHDL…AGGGKSKPNT (450 aa)) lie on the Extracellular side of the membrane. LRR repeat units lie at residues 64–88 (AGKV…LSSL), 89–111 (TSLT…LARM), and 112–134 (GSLA…FLHG). N-linked (GlcNAc...) asparagine glycosylation is found at N159, N170, N196, N256, N286, N371, N376, N387, and N400. 6 LRR repeats span residues 184-208 (LVSL…LSSL), 235-261 (MKSL…TQLE), 281-303 (LMSL…AFAA), 364-388 (SSDV…LANL), 389-411 (TRLA…VLTT), and 413-438 (PSLT…SVNV). The disordered stretch occupies residues 448 to 472 (SSGSSGGGGGSDGDSSSSDSAGGGK). The chain crosses the membrane as a helical span at residues 478–498 (GMIIGIIVAVIILFACIALLV). The Cytoplasmic segment spans residues 499–912 (HHRKKKNVEK…SFNVPRKYNG (414 aa)). Residues 580–859 (FSEDCILGRG…HCVNRLSSLV (280 aa)) enclose the Protein kinase domain. Residues 586–594 (LGRGGFGVV) and K607 each bind ATP. D708 (proton acceptor) is an active-site residue.

Belongs to the protein kinase superfamily. Ser/Thr protein kinase family. Mn(2+) serves as cofactor. Expressed in young and mature leaves.

It localises to the cell membrane. It carries out the reaction L-seryl-[protein] + ATP = O-phospho-L-seryl-[protein] + ADP + H(+). It catalyses the reaction L-threonyl-[protein] + ATP = O-phospho-L-threonyl-[protein] + ADP + H(+). Functionally, transmembrane kinase receptor involved in the regulation of reactive oxygen species (ROS) homeostasis, chloroplast development and leaf senescence. This chain is Receptor protein kinase WSS1, found in Oryza sativa subsp. japonica (Rice).